The primary structure comprises 385 residues: MVGFGAPRRTGRLPPFVLVALLAVIGLLAFNYWSVSARQAALHDELLGLQAQVQRTEVARSRLEKRNSELMMQSDSHRRQIEQKQGEYQGLGERLQARDIQAQRCELDKSKLQNNVSLQMADISHLKEQLAELRHEFLRQEDQLHEYKNNNTFLQKSLQEESQQCAQQLAERKREYEENLTKQKEELDKQPQKDEEEGGTVDNKMHILPSEVKEKIEDPSSNRLPFAQDGIKLESDAGMPEIEDNEPAKEDSLQNDVKGQDTGALPSQSKSLLEKQPSLQPLSFTEHEVKKPLPDKKETVQIPEVEENALQLEPHPLKQMPRDSKTMSFNLKQSRFFDENESPVDPQHGSKVADYNGDDGNVEDDDHDGQADAGEYHKDHLNETL.

The Cytoplasmic segment spans residues 1–12 (MVGFGAPRRTGR). Residues 13-33 (LPPFVLVALLAVIGLLAFNYW) form a helical; Signal-anchor for type II membrane protein membrane-spanning segment. At 34–385 (SVSARQAALH…YHKDHLNETL (352 aa)) the chain is on the lumenal side. A coiled-coil region spans residues 44 to 193 (DELLGLQAQV…KEELDKQPQK (150 aa)). The tract at residues 169–385 (LAERKREYEE…YHKDHLNETL (217 aa)) is disordered. 2 stretches are compositionally biased toward basic and acidic residues: residues 170 to 193 (AERKREYEENLTKQKEELDKQPQK) and 211 to 220 (EVKEKIEDPS). The segment covering 265 to 283 (LPSQSKSLLEKQPSLQPLS) has biased composition (polar residues). The segment covering 285 to 299 (TEHEVKKPLPDKKET) has biased composition (basic and acidic residues). A compositionally biased stretch (acidic residues) spans 356–367 (NGDDGNVEDDDH). The segment covering 368-385 (DGQADAGEYHKDHLNETL) has biased composition (basic and acidic residues).

It belongs to the GOLM family.

Its subcellular location is the membrane. This chain is Protein GOLM2 (golm2), found in Xenopus laevis (African clawed frog).